Reading from the N-terminus, the 168-residue chain is Large ribosomal subunit protein uL10 (168 aa).

This sequence belongs to the universal ribosomal protein uL10 family. Part of the ribosomal stalk of the 50S ribosomal subunit. The N-terminus interacts with L11 and the large rRNA to form the base of the stalk. The C-terminus forms an elongated spine to which L12 dimers bind in a sequential fashion forming a multimeric L10(L12)X complex.

Forms part of the ribosomal stalk, playing a central role in the interaction of the ribosome with GTP-bound translation factors. This Acinetobacter baylyi (strain ATCC 33305 / BD413 / ADP1) protein is Large ribosomal subunit protein uL10.